The sequence spans 705 residues: UvrABC system protein C (705 aa).

Positions 16–95 constitute a GIY-YIG domain; the sequence is ETPGVYRFRD…IKQFDPRFNV (80 aa). The UVR domain occupies 208-243; that stretch reads GRYLRRLEREMQQAAQAQEYERAARLRDDIGALRRA. A compositionally biased stretch (low complexity) spans 315-332; it reads AASTGTAGSTVPTTTAGS. 2 disordered regions span residues 315–335 and 683–705; these read AASTGTAGSTVPTTTAGSQGE and RADAPAPVVDPRTGEILDTETVS.

This sequence belongs to the UvrC family. Interacts with UvrB in an incision complex.

The protein resides in the cytoplasm. Its function is as follows. The UvrABC repair system catalyzes the recognition and processing of DNA lesions. UvrC both incises the 5' and 3' sides of the lesion. The N-terminal half is responsible for the 3' incision and the C-terminal half is responsible for the 5' incision. The polypeptide is UvrABC system protein C (Frankia casuarinae (strain DSM 45818 / CECT 9043 / HFP020203 / CcI3)).